Consider the following 1080-residue polypeptide: uncharacterized protein (1080 aa).

The N-terminal stretch at 1–17 is a signal peptide; the sequence is MHKLLVIIAHIIVCAYA. The Extracellular segment spans residues 18 to 1042; the sequence is DFTGFDNEAG…KSLDLEMIGK (1025 aa). N-linked (GlcNAc...) asparagine; by host glycans are attached at residues asparagine 439, asparagine 664, and asparagine 875. The chain crosses the membrane as a helical span at residues 1043-1063; sequence IILLIAFVIVFVILLTIGIIT. At 1064-1080 the chain is on the cytoplasmic side; sequence LVKRHRETLPEDEYLLP.

The protein resides in the host membrane. This is an uncharacterized protein from Ostreid herpesvirus 1 (isolate France) (OsHV-1).